A 332-amino-acid polypeptide reads, in one-letter code: Alpha/beta hydrolase domain-containing protein aho-3 (332 aa).

A compositionally biased stretch (low complexity) spans 1 to 15 (MSSGAPSGSSMSSTP). Positions 1-24 (MSSGAPSGSSMSSTPGSPPPRAGG) are disordered. Residues S191, D256, and H285 each act as charge relay system in the active site.

It belongs to the AB hydrolase superfamily. ABHD17 family. Palmitoylated on cysteine residues located in a cysteine cluster at the N-terminus which promotes membrane localization and localization to sensory neuron endings. As to expression, expressed in a subset of neurons including AIY, HSN, ADF, AFD, AWC, AWB and NSM, hypodermis, pharyngeal muscle and intestine.

It localises to the cell membrane. Its subcellular location is the cytoplasmic vesicle membrane. The enzyme catalyses S-hexadecanoyl-L-cysteinyl-[protein] + H2O = L-cysteinyl-[protein] + hexadecanoate + H(+). Its function is as follows. Hydrolyzes fatty acids from S-acylated cysteine residues in proteins. Acts in sensory neurons including AWC to regulate starvation-induced thermotaxis plasticity and salt learning behavior. In Caenorhabditis elegans, this protein is Alpha/beta hydrolase domain-containing protein aho-3.